The chain runs to 520 residues: BTB/POZ domain-containing protein At3g50780 (520 aa).

The disordered stretch occupies residues 43–68; sequence SHNSLTKHKQSSPALQPPKPEKKPSS. The region spanning 127–196 is the BTB domain; the sequence is AKVILVGKQG…MYCKDMKQRL (70 aa).

The protein operates within protein modification; protein ubiquitination. Functionally, may act as a substrate-specific adapter of an E3 ubiquitin-protein ligase complex (CUL3-RBX1-BTB) which mediates the ubiquitination and subsequent proteasomal degradation of target proteins. The chain is BTB/POZ domain-containing protein At3g50780 from Arabidopsis thaliana (Mouse-ear cress).